The primary structure comprises 327 residues: BarH-like 1 homeobox protein (327 aa).

Disordered regions lie at residues methionine 1–arginine 90, alanine 112–alanine 184, and glycine 305–arginine 327. Residues arginine 33–proline 54 show a composition bias toward low complexity. Over residues glutamine 79 to arginine 90 the composition is skewed to polar residues. Composition is skewed to basic and acidic residues over residues alanine 133–lysine 143 and serine 152–serine 166. The segment at residues proline 178–threonine 237 is a DNA-binding region (homeobox). Residues leucine 316 to arginine 327 are compositionally biased toward low complexity.

The protein belongs to the BAR homeobox family.

It localises to the nucleus. The polypeptide is BarH-like 1 homeobox protein (BARHL1) (Homo sapiens (Human)).